The following is a 360-amino-acid chain: Putative beta-glucosidase 15 (360 aa).

Basic and acidic residues-rich tracts occupy residues 1–11 and 47–67; these read MARRRMGEEGK and GRRE…ERKG. Disordered stretches follow at residues 1–21 and 35–103; these read MARR…NGRQ and GWRS…RAER. Residues 75 to 86 are compositionally biased toward basic residues; the sequence is GKRRRERRRGGR. Residue Y183 coordinates a beta-D-glucoside. Residues C191 and C196 are joined by a disulfide bond. A beta-D-glucoside is bound by residues E254, W301, 308–309, and F317; that span reads EW. E254 functions as the Nucleophile in the catalytic mechanism. N-linked (GlcNAc...) asparagine glycosylation occurs at N346.

The protein belongs to the glycosyl hydrolase 1 family.

The catalysed reaction is Hydrolysis of terminal, non-reducing beta-D-glucosyl residues with release of beta-D-glucose.. The chain is Putative beta-glucosidase 15 (BGLU15) from Oryza sativa subsp. japonica (Rice).